The chain runs to 159 residues: MTHCCSPCCQPTCCRTTCWQPTTVTTCSSTPCCQPSCCVSSCCQPCCHPTCCQNTCCRTTCCQPICVTSCCQPSCCSTPCCQPTCCGSSCGQSSSCAPVYCRRTCYHPTSVCLPGCLNQSCGSNCCQPCCRPACCETTCCRTTCFQPTCVYSCCQPSCC.

16 consecutive repeat copies span residues 8–12 (CCQPT), 13–17 (CCRTT), 32–36 (CCQPS), 37–41 (CCVSS), 46–50 (CCHPT), 51–55 (CCQNT), 56–60 (CCRTT), 61–65 (CCQPI), 70–74 (CCQPS), 75–79 (CCSTP), 80–84 (CCQPT), 85–89 (CCGSS), 129–133 (CCRPA), 134–138 (CCETT), 139–143 (CCRTT), and 153–157 (CCQPS). The interval 8-157 (CCQPTCCRTT…TCVYSCCQPS (150 aa)) is 16 X 5 AA repeats of C-C-[RQVSHE]-[SPTN]-[TASPI].

Belongs to the KRTAP type 9 family. As to quaternary structure, interacts with hair keratins.

Its function is as follows. In the hair cortex, hair keratin intermediate filaments are embedded in an interfilamentous matrix, consisting of hair keratin-associated proteins (KRTAP), which are essential for the formation of a rigid and resistant hair shaft through their extensive disulfide bond cross-linking with abundant cysteine residues of hair keratins. The matrix proteins include the high-sulfur and high-glycine-tyrosine keratins. The protein is Keratin-associated protein 9-3 (KRTAP9-3) of Homo sapiens (Human).